We begin with the raw amino-acid sequence, 26 residues long: Maculatin-3.1 (26 aa).

The residue at position 26 (A26) is an Alanine amide.

As to expression, expressed by the skin dorsal glands.

The protein localises to the secreted. Shows antibacterial activity against S.uberis. The protein is Maculatin-3.1 of Ranoidea genimaculata (Brown-spotted tree frog).